Consider the following 309-residue polypeptide: Lipoyl synthase (309 aa).

C43, C48, C54, C70, C74, C77, and S283 together coordinate [4Fe-4S] cluster. The Radical SAM core domain maps to 56–272 (AVRKTATFMI…KEIAMQKGFS (217 aa)).

This sequence belongs to the radical SAM superfamily. Lipoyl synthase family. Requires [4Fe-4S] cluster as cofactor.

It localises to the cytoplasm. It catalyses the reaction [[Fe-S] cluster scaffold protein carrying a second [4Fe-4S](2+) cluster] + N(6)-octanoyl-L-lysyl-[protein] + 2 oxidized [2Fe-2S]-[ferredoxin] + 2 S-adenosyl-L-methionine + 4 H(+) = [[Fe-S] cluster scaffold protein] + N(6)-[(R)-dihydrolipoyl]-L-lysyl-[protein] + 4 Fe(3+) + 2 hydrogen sulfide + 2 5'-deoxyadenosine + 2 L-methionine + 2 reduced [2Fe-2S]-[ferredoxin]. Its pathway is protein modification; protein lipoylation via endogenous pathway; protein N(6)-(lipoyl)lysine from octanoyl-[acyl-carrier-protein]. Functionally, catalyzes the radical-mediated insertion of two sulfur atoms into the C-6 and C-8 positions of the octanoyl moiety bound to the lipoyl domains of lipoate-dependent enzymes, thereby converting the octanoylated domains into lipoylated derivatives. The sequence is that of Lipoyl synthase from Shouchella clausii (strain KSM-K16) (Alkalihalobacillus clausii).